Reading from the N-terminus, the 485-residue chain is Glutamate--tRNA ligase (485 aa).

The short motif at 12-22 is the 'HIGH' region element; sequence PSPTGEPHVGT. The 'KMSKS' region signature appears at 253 to 257; it reads KLSKR. Lysine 256 is an ATP binding site.

This sequence belongs to the class-I aminoacyl-tRNA synthetase family. Glutamate--tRNA ligase type 1 subfamily. Monomer.

It is found in the cytoplasm. It carries out the reaction tRNA(Glu) + L-glutamate + ATP = L-glutamyl-tRNA(Glu) + AMP + diphosphate. Functionally, catalyzes the attachment of glutamate to tRNA(Glu) in a two-step reaction: glutamate is first activated by ATP to form Glu-AMP and then transferred to the acceptor end of tRNA(Glu). This is Glutamate--tRNA ligase from Rhizobium meliloti (strain 1021) (Ensifer meliloti).